The sequence spans 478 residues: E3 ubiquitin-protein ligase makorin-1 (478 aa).

C3H1-type zinc fingers lie at residues 51-78 (WTKQ…HDLS), 80-107 (SQSA…HTKP), and 204-231 (EMKK…HGDA). The interval 232–259 (CDMCGLQVLHPVDAAQRSQHIKSCIEAH) is makorin-type Cys-His. The RING-type zinc finger occupies 277 to 331 (CGICMEVVYEKANPSERRFGILSNCNHTYCLKCIRKWRSAKQFESKIIKSCPECR). Residues 360-389 (AMSNKPCRYFDEGRGSCPFGGNCFYKHAYP) form a C3H1-type 4 zinc finger.

In terms of assembly, interacts with p53/TP53 and CDKN1A. Interacts with TERT, modulating telomere length homeostasis. In terms of processing, auto-ubiquitinated; which leads to proteasomal degradation.

The catalysed reaction is S-ubiquitinyl-[E2 ubiquitin-conjugating enzyme]-L-cysteine + [acceptor protein]-L-lysine = [E2 ubiquitin-conjugating enzyme]-L-cysteine + N(6)-ubiquitinyl-[acceptor protein]-L-lysine.. It participates in protein modification; protein ubiquitination. Functionally, E3 ubiquitin ligase catalyzing the covalent attachment of ubiquitin moieties onto substrate proteins. These substrates include FILIP1, p53/TP53, CDKN1A and TERT. Keeps cells alive by suppressing p53/TP53 under normal conditions, but stimulates apoptosis by repressing CDKN1A under stress conditions. Acts as a negative regulator of telomerase. Has negative and positive effects on RNA polymerase II-dependent transcription. This is E3 ubiquitin-protein ligase makorin-1 (MKRN1) from Notamacropus eugenii (Tammar wallaby).